A 175-amino-acid chain; its full sequence is NADH-ubiquinone oxidoreductase chain 6 (175 aa).

A run of 5 helical transmembrane segments spans residues 1-21 (MMYM…GFSS), 26-46 (IYGG…VMGL), 47-67 (GGSF…LVVF), 87-107 (VILS…VWMI), and 152-172 (WLVI…IEIT).

Belongs to the complex I subunit 6 family.

Its subcellular location is the mitochondrion membrane. It carries out the reaction a ubiquinone + NADH + 5 H(+)(in) = a ubiquinol + NAD(+) + 4 H(+)(out). Core subunit of the mitochondrial membrane respiratory chain NADH dehydrogenase (Complex I) that is believed to belong to the minimal assembly required for catalysis. Complex I functions in the transfer of electrons from NADH to the respiratory chain. The immediate electron acceptor for the enzyme is believed to be ubiquinone. This chain is NADH-ubiquinone oxidoreductase chain 6 (MT-ND6), found in Dasypus novemcinctus (Nine-banded armadillo).